A 339-amino-acid chain; its full sequence is Small ribosomal subunit biogenesis GTPase RsgA (339 aa).

The CP-type G domain maps to 111 to 271 (MRGLLKPVAA…LIDSPGIREF (161 aa)). Residues 159-162 (NKAD) and 213-221 (GQSGVGKSS) contribute to the GTP site. The Zn(2+) site is built by cysteine 295, cysteine 300, histidine 302, and cysteine 308.

The protein belongs to the TRAFAC class YlqF/YawG GTPase family. RsgA subfamily. Monomer. Associates with 30S ribosomal subunit, binds 16S rRNA. Requires Zn(2+) as cofactor.

The protein localises to the cytoplasm. Functionally, one of several proteins that assist in the late maturation steps of the functional core of the 30S ribosomal subunit. Helps release RbfA from mature subunits. May play a role in the assembly of ribosomal proteins into the subunit. Circularly permuted GTPase that catalyzes slow GTP hydrolysis, GTPase activity is stimulated by the 30S ribosomal subunit. This chain is Small ribosomal subunit biogenesis GTPase RsgA, found in Pseudomonas aeruginosa (strain LESB58).